Here is a 124-residue protein sequence, read N- to C-terminus: Small ribosomal subunit protein uS12 (124 aa).

At Asp-89 the chain carries 3-methylthioaspartic acid.

It belongs to the universal ribosomal protein uS12 family. In terms of assembly, part of the 30S ribosomal subunit. Contacts proteins S8 and S17. May interact with IF1 in the 30S initiation complex.

In terms of biological role, with S4 and S5 plays an important role in translational accuracy. Functionally, interacts with and stabilizes bases of the 16S rRNA that are involved in tRNA selection in the A site and with the mRNA backbone. Located at the interface of the 30S and 50S subunits, it traverses the body of the 30S subunit contacting proteins on the other side and probably holding the rRNA structure together. The combined cluster of proteins S8, S12 and S17 appears to hold together the shoulder and platform of the 30S subunit. This Serratia proteamaculans (strain 568) protein is Small ribosomal subunit protein uS12.